We begin with the raw amino-acid sequence, 947 residues long: Bifunctional glutamine synthetase adenylyltransferase/adenylyl-removing enzyme (947 aa).

An adenylyl removase region spans residues 1 to 440 (MTPLSSPLSQ…VFNELIGDDE (440 aa)). The segment at 450–947 (SEPWREVWQD…ASWRKWLVAV (498 aa)) is adenylyl transferase.

This sequence belongs to the GlnE family. The cofactor is Mg(2+).

It catalyses the reaction [glutamine synthetase]-O(4)-(5'-adenylyl)-L-tyrosine + phosphate = [glutamine synthetase]-L-tyrosine + ADP. It carries out the reaction [glutamine synthetase]-L-tyrosine + ATP = [glutamine synthetase]-O(4)-(5'-adenylyl)-L-tyrosine + diphosphate. Functionally, involved in the regulation of glutamine synthetase GlnA, a key enzyme in the process to assimilate ammonia. When cellular nitrogen levels are high, the C-terminal adenylyl transferase (AT) inactivates GlnA by covalent transfer of an adenylyl group from ATP to specific tyrosine residue of GlnA, thus reducing its activity. Conversely, when nitrogen levels are low, the N-terminal adenylyl removase (AR) activates GlnA by removing the adenylyl group by phosphorolysis, increasing its activity. The regulatory region of GlnE binds the signal transduction protein PII (GlnB) which indicates the nitrogen status of the cell. The polypeptide is Bifunctional glutamine synthetase adenylyltransferase/adenylyl-removing enzyme (Salmonella schwarzengrund (strain CVM19633)).